The following is a 764-amino-acid chain: MKKRKVLIPLMALSTILVSSTGNLEVIQAEVKQENRLLNESESSSQGLLGYYFSDLNFQAPMVVTSSTTGDLSIPSSELENIPSENQYFQSAIWSGFIKVKKSDEYTFATSADNHVTMWVDDQEVINKASNSNKIRLEKGRLYQIKIQYQRENPTEKGLDFKLYWTDSQNKKEVISSDNLQLPELKQKSSNSRKKRSTSAGPTVPDRDNDGIPDSLEVEGYTVDVKNKRTFLSPWISNIHEKKGLTKYKSSPEKWSTASDPYSDFEKVTGRIDKNVSPEARHPLVAAYPIVHVDMENIILSKNEDQSTQNTDSQTRTISKNTSTSRTHTSEVHGNAEVHASFFDIGGSVSAGFSNSNSSTVAIDHSLSLAGERTWAETMGLNTADTARLNANIRYVNTGTAPIYNVLPTTSLVLGKNQTLATIKAKENQLSQILAPNNYYPSKNLAPIALNAQDDFSSTPITMNYNQFLELEKTKQLRLDTDQVYGNIATYNFENGRVRVDTGSNWSEVLPQIQETTARIIFNGKDLNLVERRIAAVNPSDPLETTKPDMTLKEALKIAFGFNEPNGNLQYQGKDITEFDFNFDQQTSQNIKNQLAELNATNIYTVLDKIKLNAKMNILIRDKRFHYDRNNIAVGADESVVKEAHREVINSSTEGLLLNIDKDIRKILSGYIVEIEDTEGLKEVINDRYDMLNISSLRQDGKTFIDFKKYNDKLPLYISNPNYKVNVYAVTKENTIINPSENGDTSTNGIKKILIFSKKGYEIG.

An N-terminal signal peptide occupies residues 1–29 (MKKRKVLIPLMALSTILVSSTGNLEVIQA). The tract at residues 30 to 287 (EVKQENRLLN…PEARHPLVAA (258 aa)) is domain 1, calcium-binding; LF and EF binding sites. Residues 43–179 (SSSQGLLGYY…NKKEVISSDN (137 aa)) enclose the PA14 domain. A disordered region spans residues 176 to 214 (SSDNLQLPELKQKSSNSRKKRSTSAGPTVPDRDNDGIPD). Ca(2+) is bound by residues D206, D208, D210, I212, and E217. An alpha-clamp region spans residues 231 to 239 (FLSPWISNI). Residues S251, K254, and D264 each coordinate Ca(2+). The tract at residues 288–516 (YPIVHVDMEN…SEVLPQIQET (229 aa)) is domain 2, membrane insertion and heptamerization. Residues 302–333 (KNEDQSTQNTDSQTRTISKNTSTSRTHTSEVH) form a disordered region. Residues 306 to 327 (QSTQNTDSQTRTISKNTSTSRT) are compositionally biased toward polar residues. The next 2 membrane-spanning stretches (beta stranded) occupy residues 331 to 342 (EVHGNAEVHASF) and 345 to 354 (IGGSVSAGFS). Positions 517-624 (TARIIFNGKD…KMNILIRDKR (108 aa)) are domain 3, heptamerization. A domain 4, binding to the receptor region spans residues 625–764 (FHYDRNNIAV…IFSKKGYEIG (140 aa)).

The protein belongs to the bacterial binary toxin family. In terms of assembly, interacts with host ANTXR1 and ANTXR2. Homooligomer; homooligomerizes to form homoheptamers (PA-63(7)) or homooctamers (PA-63(8)). PA-63(7) or PA-63(8) form ring-shaped oligomers that are in a pre-pore conformation, which do not penetrate the host membrane. PA-63(8) displays an enhanced stability, suggesting that this form circulates in the blood to reach and exert toxicity even in distant tissues. Interacts with lethal factor (LF) and edema factor (EF); can bind LF and EF simultaneously and interaction takes place following homooligomerization on the host cell membrane. PA-63(7) homoheptamer interacts with three molecules of LF to form the PA(7)LF(3) complex, in which the relative position of the N-terminal alpha-helices in the three LFs determines which factor is translocated first. Proteolytic activation by FURIN cleaves the protein in two parts, PA-20 and PA-63; the latter is the mature protein. The cleavage occurs at the cell surface and probably in the serum of infected animals as well; both native and cleaved PA are able to bind to the cell receptor. The release of PA-20 from the remaining receptor-bound PA-63 exposes the binding site for EF and LF, and promotes oligomerization and internalization of the protein.

The protein resides in the secreted. It localises to the host cell membrane. The protein localises to the host endosome membrane. Its function is as follows. Protective antigen constitutes one of the three proteins composing the anthrax toxin; it mediates attachment to host cells and translocation of edema factor (EF) and lethal factor (LF) into the host cytoplasm. PA associated with LF forms the lethal toxin (LeTx) and causes death when injected; PA associated with EF forms the edema toxin (EdTx) and produces edema. PA induces immunity to infection with anthrax. Mediates the attachment to host cells by binding host cell receptors ANTXR1 and ANTXR2. Following host cell surface attachment, PA is cleaved by FURIN to generate the PA-63 (Protective antigen PA-63) form, which constitutes the mature form of the protein that oligomerizes and forms a pore to translocate the enzymatic toxin components edema factor (EF) and lethal factor (LF) into the host cytosol. In terms of biological role, mature form that oligomerizes and forms a pore to translocate the enzymatic toxin components edema factor (EF) and lethal factor (LF) into the host cytosol. Following attachment to host cell receptors and cleavage by FURIN, homooligomerizes to form ring-shaped oligomers that are in a pre-pore conformation, and associates with EF and LF. Toxin-leaded complexes are then endocytosed in a clathrin-dependent process, followed by a conformational change of oligomerized PA-63 from the pre-pore to pore state, which is triggered by the low pH in the endosome. Once active, the pore mediates unfolding of EF and LF, which pass through the pore and translocate into the host cytosol. This chain is Protective antigen (pagA), found in Bacillus anthracis.